Reading from the N-terminus, the 121-residue chain is UPF0102 protein Syncc9902_1284 (121 aa).

It belongs to the UPF0102 family.

This chain is UPF0102 protein Syncc9902_1284, found in Synechococcus sp. (strain CC9902).